Here is a 156-residue protein sequence, read N- to C-terminus: ATP synthase subunit b (156 aa).

A helical transmembrane segment spans residues Leu7–Leu29.

Belongs to the ATPase B chain family. In terms of assembly, F-type ATPases have 2 components, F(1) - the catalytic core - and F(0) - the membrane proton channel. F(1) has five subunits: alpha(3), beta(3), gamma(1), delta(1), epsilon(1). F(0) has three main subunits: a(1), b(2) and c(10-14). The alpha and beta chains form an alternating ring which encloses part of the gamma chain. F(1) is attached to F(0) by a central stalk formed by the gamma and epsilon chains, while a peripheral stalk is formed by the delta and b chains.

It is found in the cell inner membrane. Its function is as follows. F(1)F(0) ATP synthase produces ATP from ADP in the presence of a proton or sodium gradient. F-type ATPases consist of two structural domains, F(1) containing the extramembraneous catalytic core and F(0) containing the membrane proton channel, linked together by a central stalk and a peripheral stalk. During catalysis, ATP synthesis in the catalytic domain of F(1) is coupled via a rotary mechanism of the central stalk subunits to proton translocation. In terms of biological role, component of the F(0) channel, it forms part of the peripheral stalk, linking F(1) to F(0). This is ATP synthase subunit b from Ectopseudomonas mendocina (strain ymp) (Pseudomonas mendocina).